The primary structure comprises 360 residues: MWRSIISFLFFSVALCQPFLFQKRSSNISDFISFNASLPNVTIFAMGGTIAGYASSSTETVDYAAGSVGIATLVDAVPAIKNFSNIRGVQVTNVGSEELTPANVLNLTQLILAEVAKPDVHGIVVTHGTDSLEETAMFLDMTVNTTKPIVVVGAMRPSTAISADGPMNLLNAVVVAASNRSIGRGTMILLNDRIGSAFYTTKTNGNMLDTFKSYEAGFLGMILDQRPHFFYSPATPTGKVHFDVSNTTELPAVEILYGYQGLNPNLAKAAVDLGAKGLVLAGMGAASWTDPGNEVIDGLISNQSIPVVYSHRTMDGFSDYYYNGIPSYFQNPQKARYMLMLSINAGYSIQNITDIFSLEY.

The N-terminal stretch at Met1–Cys16 is a signal peptide. N-linked (GlcNAc...) asparagine glycosylation is found at Asn27, Asn35, and Asn40. The 321-residue stretch at Pro39–Glu359 folds into the Asparaginase/glutaminase domain. Residue Thr49 is the O-isoaspartyl threonine intermediate of the active site. A glycan (N-linked (GlcNAc...) asparagine) is linked at Asn82. Residue Ser96 coordinates substrate. An N-linked (GlcNAc...) asparagine glycan is attached at Asn106. Thr129–Asp130 is a binding site for substrate. Residues Asn144, Asn179, Asn246, Asn302, and Asn351 are each glycosylated (N-linked (GlcNAc...) asparagine).

The protein belongs to the asparaginase 1 family.

It localises to the secreted. The protein resides in the cell wall. It catalyses the reaction L-asparagine + H2O = L-aspartate + NH4(+). In Schizosaccharomyces pombe (strain 972 / ATCC 24843) (Fission yeast), this protein is Probable L-asparaginase 1.